Consider the following 430-residue polypeptide: Putative cytochrome P450 139 (430 aa).

Cys-372 is a binding site for heme.

Belongs to the cytochrome P450 family. It depends on heme as a cofactor.

In Mycobacterium bovis (strain ATCC BAA-935 / AF2122/97), this protein is Putative cytochrome P450 139 (cyp139).